The sequence spans 619 residues: Zinc finger protein 668 (619 aa).

An N-acetylmethionine modification is found at Met-1. Phosphoserine is present on Ser-10. The C2H2-type 1 zinc finger occupies 22-44; sequence YKCLSCTKTFPNAPRAARHAATH. Residues 34 to 79 are disordered; that stretch reads APRAARHAATHGPADCSEEVAEVKPKPETEAKAEEASGEKVSGSAA. Residues 54-71 show a composition bias toward basic and acidic residues; that stretch reads AEVKPKPETEAKAEEASG. Residues Lys-57, Lys-59, Lys-65, and Lys-80 each participate in a glycyl lysine isopeptide (Lys-Gly) (interchain with G-Cter in SUMO2) cross-link. 11 C2H2-type zinc fingers span residues 84–106, 112–134, 140–162, 168–190, 196–218, 224–246, 252–274, 280–302, 308–330, 336–358, and 364–386; these read YACP…GRSH, FPCP…LASH, FRCA…QRGH, YACA…RRTH, YSCE…ERSH, FLCS…QRIH, YRCP…ERTH, FLCP…QRAH, YHCE…RRVH, FKCL…ALVH, and FRCE…SRVH. Lys-154 is covalently cross-linked (Glycyl lysine isopeptide (Lys-Gly) (interchain with G-Cter in SUMO2)). Ser-387 carries the post-translational modification Phosphoserine. Residues 392-414 form a C2H2-type 13 zinc finger; it reads FHCNACGKSFVVSSSLRKHERTH. Positions 492–513 are disordered; it reads REAPGPLEGAGEAGGEEADEKP. A Glycyl lysine isopeptide (Lys-Gly) (interchain with G-Cter in SUMO2) cross-link involves residue Lys-512. 3 consecutive C2H2-type zinc fingers follow at residues 516–538, 544–566, and 572–594; these read FVCR…ERSH, FPCT…SRTH, and YTCP…ERTH.

It belongs to the krueppel C2H2-type zinc-finger protein family.

Its subcellular location is the nucleus. Its function is as follows. May be involved in transcriptional regulation. May play a role in DNA repair process. This Homo sapiens (Human) protein is Zinc finger protein 668 (ZNF668).